Here is a 326-residue protein sequence, read N- to C-terminus: Tryptophan--tRNA ligase (326 aa).

ATP-binding positions include 11 to 13 (QPT) and 19 to 20 (GN). The short motif at 12–20 (PTGQIHLGN) is the 'HIGH' region element. Residue Asp135 coordinates L-tryptophan. Residues 147–149 (GED), Val186, and 195–199 (KMSKS) each bind ATP. Residues 195 to 199 (KMSKS) carry the 'KMSKS' region motif.

Belongs to the class-I aminoacyl-tRNA synthetase family. In terms of assembly, homodimer.

It localises to the cytoplasm. The enzyme catalyses tRNA(Trp) + L-tryptophan + ATP = L-tryptophyl-tRNA(Trp) + AMP + diphosphate + H(+). Functionally, catalyzes the attachment of tryptophan to tRNA(Trp). In Helicobacter pylori (strain J99 / ATCC 700824) (Campylobacter pylori J99), this protein is Tryptophan--tRNA ligase.